We begin with the raw amino-acid sequence, 570 residues long: Sulfite reductase [NADPH] hemoprotein beta-component (570 aa).

[4Fe-4S] cluster-binding residues include Cys-434, Cys-440, Cys-479, and Cys-483. Cys-483 serves as a coordination point for siroheme.

The protein belongs to the nitrite and sulfite reductase 4Fe-4S domain family. Alpha(8)-beta(8). The alpha component is a flavoprotein, the beta component is a hemoprotein. Siroheme is required as a cofactor. The cofactor is [4Fe-4S] cluster.

It carries out the reaction hydrogen sulfide + 3 NADP(+) + 3 H2O = sulfite + 3 NADPH + 4 H(+). It participates in sulfur metabolism; hydrogen sulfide biosynthesis; hydrogen sulfide from sulfite (NADPH route): step 1/1. Component of the sulfite reductase complex that catalyzes the 6-electron reduction of sulfite to sulfide. This is one of several activities required for the biosynthesis of L-cysteine from sulfate. The chain is Sulfite reductase [NADPH] hemoprotein beta-component from Shigella flexneri.